The chain runs to 412 residues: Proteasome-activating nucleotidase (412 aa).

Positions 15-73 (EDIYQYLLERITNLENRNLELREQFRQMESEKRYVETQKIRYERELRKLKSEIEQLRSP) form a coiled coil. ATP is bound by residues 197–202 (GTGKTL) and H336. The docks into pockets in the proteasome alpha-ring to cause gate opening stretch occupies residues 410–412 (MFA).

This sequence belongs to the AAA ATPase family. In terms of assembly, homohexamer. The hexameric complex has a two-ring architecture resembling a top hat that caps the 20S proteasome core at one or both ends. Upon ATP-binding, the C-terminus of PAN interacts with the alpha-rings of the proteasome core by binding to the intersubunit pockets.

The protein localises to the cytoplasm. ATPase which is responsible for recognizing, binding, unfolding and translocation of substrate proteins into the archaeal 20S proteasome core particle. Is essential for opening the gate of the 20S proteasome via an interaction with its C-terminus, thereby allowing substrate entry and access to the site of proteolysis. Thus, the C-termini of the proteasomal ATPase function like a 'key in a lock' to induce gate opening and therefore regulate proteolysis. Unfolding activity requires energy from ATP hydrolysis, whereas ATP binding alone promotes ATPase-20S proteasome association which triggers gate opening, and supports translocation of unfolded substrates. The sequence is that of Proteasome-activating nucleotidase from Methanoculleus marisnigri (strain ATCC 35101 / DSM 1498 / JR1).